Here is a 127-residue protein sequence, read N- to C-terminus: NADPH-dependent 7-cyano-7-deazaguanine reductase (127 aa).

The Thioimide intermediate role is filled by C40. Catalysis depends on D47, which acts as the Proton donor. Substrate-binding positions include 62–64 and 81–82; these read VEL and HE.

It belongs to the GTP cyclohydrolase I family. QueF type 1 subfamily.

It localises to the cytoplasm. The catalysed reaction is 7-aminomethyl-7-carbaguanine + 2 NADP(+) = 7-cyano-7-deazaguanine + 2 NADPH + 3 H(+). Its pathway is tRNA modification; tRNA-queuosine biosynthesis. Functionally, catalyzes the NADPH-dependent reduction of 7-cyano-7-deazaguanine (preQ0) to 7-aminomethyl-7-deazaguanine (preQ1). The protein is NADPH-dependent 7-cyano-7-deazaguanine reductase of Campylobacter jejuni (strain RM1221).